Here is a 275-residue protein sequence, read N- to C-terminus: Phosphate import ATP-binding protein PstB (275 aa).

The region spanning 29–270 (VSVRDLNFYY…PTDRRTQDYI (242 aa)) is the ABC transporter domain. 61-68 (GPSGCGKS) serves as a coordination point for ATP.

Belongs to the ABC transporter superfamily. Phosphate importer (TC 3.A.1.7) family. In terms of assembly, the complex is composed of two ATP-binding proteins (PstB), two transmembrane proteins (PstC and PstA) and a solute-binding protein (PstS).

It is found in the cell inner membrane. The enzyme catalyses phosphate(out) + ATP + H2O = ADP + 2 phosphate(in) + H(+). In terms of biological role, part of the ABC transporter complex PstSACB involved in phosphate import. Responsible for energy coupling to the transport system. The sequence is that of Phosphate import ATP-binding protein PstB from Rhodopseudomonas palustris (strain BisB18).